The following is a 215-amino-acid chain: Orotate phosphoribosyltransferase (215 aa).

Lys26 contributes to the 5-phospho-alpha-D-ribose 1-diphosphate binding site. 34–35 (FF) lines the orotate pocket. 5-phospho-alpha-D-ribose 1-diphosphate is bound by residues 72–73 (YK), Arg99, Lys100, Lys103, His105, and 124–132 (DDVITAGTA). Residues Thr128 and Arg156 each contribute to the orotate site.

It belongs to the purine/pyrimidine phosphoribosyltransferase family. PyrE subfamily. In terms of assembly, homodimer. It depends on Mg(2+) as a cofactor.

The enzyme catalyses orotidine 5'-phosphate + diphosphate = orotate + 5-phospho-alpha-D-ribose 1-diphosphate. Its pathway is pyrimidine metabolism; UMP biosynthesis via de novo pathway; UMP from orotate: step 1/2. Its function is as follows. Catalyzes the transfer of a ribosyl phosphate group from 5-phosphoribose 1-diphosphate to orotate, leading to the formation of orotidine monophosphate (OMP). The protein is Orotate phosphoribosyltransferase of Shewanella oneidensis (strain ATCC 700550 / JCM 31522 / CIP 106686 / LMG 19005 / NCIMB 14063 / MR-1).